The following is a 223-amino-acid chain: MKIAVVVFPGSNCDIDMYEAFHTVCKDDVEYVSYKEKSLDGFDVVVLPGGFSYGDYLRTGAIARFSNIIPAVENMAKEGKLVLGVCNGFQILTEMGLLPGALKKNDSLQFVCKTVTLEVENMHTPFTNEYADKEFIQIPIAHGDGSYYADENVLEELEDNHQVVFRYHGENPNGSLHDIAGICNKEGNVLGMMPHPERAVEEILGGIDGLPLFKSLLKAGVQA.

One can recognise a Glutamine amidotransferase type-1 domain in the interval 2 to 223 (KIAVVVFPGS…KSLLKAGVQA (222 aa)). Cys-86 serves as the catalytic Nucleophile. Catalysis depends on residues His-195 and Glu-197.

In terms of assembly, part of the FGAM synthase complex composed of 1 PurL, 1 PurQ and 2 PurS subunits.

Its subcellular location is the cytoplasm. It carries out the reaction N(2)-formyl-N(1)-(5-phospho-beta-D-ribosyl)glycinamide + L-glutamine + ATP + H2O = 2-formamido-N(1)-(5-O-phospho-beta-D-ribosyl)acetamidine + L-glutamate + ADP + phosphate + H(+). The catalysed reaction is L-glutamine + H2O = L-glutamate + NH4(+). The protein operates within purine metabolism; IMP biosynthesis via de novo pathway; 5-amino-1-(5-phospho-D-ribosyl)imidazole from N(2)-formyl-N(1)-(5-phospho-D-ribosyl)glycinamide: step 1/2. Part of the phosphoribosylformylglycinamidine synthase complex involved in the purines biosynthetic pathway. Catalyzes the ATP-dependent conversion of formylglycinamide ribonucleotide (FGAR) and glutamine to yield formylglycinamidine ribonucleotide (FGAM) and glutamate. The FGAM synthase complex is composed of three subunits. PurQ produces an ammonia molecule by converting glutamine to glutamate. PurL transfers the ammonia molecule to FGAR to form FGAM in an ATP-dependent manner. PurS interacts with PurQ and PurL and is thought to assist in the transfer of the ammonia molecule from PurQ to PurL. This Lactobacillus acidophilus (strain ATCC 700396 / NCK56 / N2 / NCFM) protein is Phosphoribosylformylglycinamidine synthase subunit PurQ.